A 147-amino-acid chain; its full sequence is Deoxyuridine 5'-triphosphate nucleotidohydrolase (147 aa).

Residues 67-69 (RSG), asparagine 80, and 84-86 (TID) each bind substrate.

This sequence belongs to the dUTPase family. The cofactor is Mg(2+).

It catalyses the reaction dUTP + H2O = dUMP + diphosphate + H(+). It functions in the pathway pyrimidine metabolism; dUMP biosynthesis; dUMP from dCTP (dUTP route): step 2/2. In terms of biological role, this enzyme is involved in nucleotide metabolism: it produces dUMP, the immediate precursor of thymidine nucleotides and it decreases the intracellular concentration of dUTP so that uracil cannot be incorporated into DNA. This chain is Deoxyuridine 5'-triphosphate nucleotidohydrolase, found in Anaeromyxobacter sp. (strain Fw109-5).